The sequence spans 263 residues: Hydroxyethylthiazole kinase (263 aa).

Met41 provides a ligand contact to substrate. ATP-binding residues include Arg117 and Ser163. Ala190 lines the substrate pocket.

This sequence belongs to the Thz kinase family. The cofactor is Mg(2+).

The catalysed reaction is 5-(2-hydroxyethyl)-4-methylthiazole + ATP = 4-methyl-5-(2-phosphooxyethyl)-thiazole + ADP + H(+). It functions in the pathway cofactor biosynthesis; thiamine diphosphate biosynthesis; 4-methyl-5-(2-phosphoethyl)-thiazole from 5-(2-hydroxyethyl)-4-methylthiazole: step 1/1. In terms of biological role, catalyzes the phosphorylation of the hydroxyl group of 4-methyl-5-beta-hydroxyethylthiazole (THZ). The sequence is that of Hydroxyethylthiazole kinase from Haemophilus influenzae (strain PittEE).